The following is a 705-amino-acid chain: Phosphoribosylformylglycinamidine synthase subunit PurL (705 aa).

The active site involves His32. Tyr35 contacts ATP. Glu76 lines the Mg(2+) pocket. Substrate is bound by residues 77–80 and Arg99; that span reads SHNH. Catalysis depends on His78, which acts as the Proton acceptor. Asp100 contributes to the Mg(2+) binding site. Gln224 contributes to the substrate binding site. Asp252 is a Mg(2+) binding site. Residue 296–298 participates in substrate binding; sequence ESQ. Residues Asp471 and Gly508 each contribute to the ATP site. Asn509 is a binding site for Mg(2+). Ser511 provides a ligand contact to substrate.

Belongs to the FGAMS family. As to quaternary structure, monomer. Part of the FGAM synthase complex composed of 1 PurL, 1 PurQ and 2 PurS subunits.

It localises to the cytoplasm. It carries out the reaction N(2)-formyl-N(1)-(5-phospho-beta-D-ribosyl)glycinamide + L-glutamine + ATP + H2O = 2-formamido-N(1)-(5-O-phospho-beta-D-ribosyl)acetamidine + L-glutamate + ADP + phosphate + H(+). It participates in purine metabolism; IMP biosynthesis via de novo pathway; 5-amino-1-(5-phospho-D-ribosyl)imidazole from N(2)-formyl-N(1)-(5-phospho-D-ribosyl)glycinamide: step 1/2. In terms of biological role, part of the phosphoribosylformylglycinamidine synthase complex involved in the purines biosynthetic pathway. Catalyzes the ATP-dependent conversion of formylglycinamide ribonucleotide (FGAR) and glutamine to yield formylglycinamidine ribonucleotide (FGAM) and glutamate. The FGAM synthase complex is composed of three subunits. PurQ produces an ammonia molecule by converting glutamine to glutamate. PurL transfers the ammonia molecule to FGAR to form FGAM in an ATP-dependent manner. PurS interacts with PurQ and PurL and is thought to assist in the transfer of the ammonia molecule from PurQ to PurL. The polypeptide is Phosphoribosylformylglycinamidine synthase subunit PurL (Pyrococcus abyssi (strain GE5 / Orsay)).